The chain runs to 868 residues: Receptor-like protein 32 (868 aa).

The first 32 residues, 1 to 32 (MKDSWNSTSIIPFTFSSLIFFLFTFDFQDVFG), serve as a signal peptide directing secretion. At 33–815 (VPTKHLCRLE…PPELEEEDRE (783 aa)) the chain is on the extracellular side. N73, N109, N141, and N165 each carry an N-linked (GlcNAc...) asparagine glycan. LRR repeat units lie at residues 118–142 (LRFL…IENF), 143–166 (SHLT…IGNL), 168–188 (QLTF…FFGN), 189–213 (MNQL…LLNL), 214–237 (KHLS…MSSL), 239–261 (NLEY…LFTI), 262–285 (ASLT…NISS), 287–310 (STLT…ISKF), 312–334 (NLQD…IFTN), 335–360 (LKSL…LFSS), 362–385 (LNSI…SVAD), 389–412 (TQLI…LRSQ), 413–436 (HKMT…LWTL), 438–459 (KLIF…TEHG), 465–489 (KPSM…ICAL), 490–515 (RSLI…NLKS), 517–538 (LSFL…IFKS), 540–560 (RSLD…FIRL), 561–586 (SALE…SLKK), 588–606 (QVLV…HASF), 607–630 (HTLR…YFVN), 675–699 (LKIY…IGLL), 700–723 (KELH…MGNL), 724–747 (RELE…LGNL), and 749–772 (YLAY…QFRR). An N-linked (GlcNAc...) asparagine glycan is attached at N233. Residues N275 and N282 are each glycosylated (N-linked (GlcNAc...) asparagine). N342 and N347 each carry an N-linked (GlcNAc...) asparagine glycan. N477 and N503 each carry an N-linked (GlcNAc...) asparagine glycan. The N-linked (GlcNAc...) asparagine glycan is linked to N574. A glycan (N-linked (GlcNAc...) asparagine) is linked at N613. 4 N-linked (GlcNAc...) asparagine glycosylation sites follow: N706, N746, N754, and N774. Residues 816 to 836 (VFSWIAAAIGFGPGIAFGLTI) form a helical membrane-spanning segment. At 837–868 (RYILVFYKPDWFMHTFGHLQPSAHEKRLRRKQ) the chain is on the cytoplasmic side.

The protein belongs to the RLP family.

The protein resides in the cell membrane. The protein is Receptor-like protein 32 of Arabidopsis thaliana (Mouse-ear cress).